The primary structure comprises 208 residues: 2-phospho-L-lactate guanylyltransferase (208 aa).

This sequence belongs to the CofC family. In terms of assembly, homodimer.

It carries out the reaction (2S)-2-phospholactate + GTP + H(+) = (2S)-lactyl-2-diphospho-5'-guanosine + diphosphate. It functions in the pathway cofactor biosynthesis; coenzyme F420 biosynthesis. Guanylyltransferase that catalyzes the activation of (2S)-2-phospholactate (2-PL) as (2S)-lactyl-2-diphospho-5'-guanosine, via the condensation of 2-PL with GTP. It is involved in the biosynthesis of coenzyme F420, a hydride carrier cofactor. This Methanosarcina acetivorans (strain ATCC 35395 / DSM 2834 / JCM 12185 / C2A) protein is 2-phospho-L-lactate guanylyltransferase.